A 144-amino-acid polypeptide reads, in one-letter code: Large ribosomal subunit protein uL15 (144 aa).

The disordered stretch occupies residues 1–52; that stretch reads MRLNSLSPAEGAKHSAKRLGRGISSGLGKTGGRGHKGQKSRTGGGVRRGFEG.

Belongs to the universal ribosomal protein uL15 family. Part of the 50S ribosomal subunit.

In terms of biological role, binds to the 23S rRNA. The chain is Large ribosomal subunit protein uL15 from Actinobacillus pleuropneumoniae serotype 7 (strain AP76).